Reading from the N-terminus, the 215-residue chain is Probable ribosome-binding factor A, chloroplastic (215 aa).

Residues 1 to 52 (MPNLLHTNQSHFFFLHHPPIYTVSSKTQAFHFPQSMAPVNLRTNLSVRRTVR) constitute a chloroplast transit peptide. Residues 183–192 (KGSGEGKTEP) are compositionally biased toward basic and acidic residues. The interval 183–210 (KGSGEGKTEPSDSTEDDQDWEVDDPDED) is disordered. Acidic residues predominate over residues 194 to 210 (DSTEDDQDWEVDDPDED).

Belongs to the RbfA family.

Its subcellular location is the plastid. It is found in the chloroplast. This is Probable ribosome-binding factor A, chloroplastic from Arabidopsis thaliana (Mouse-ear cress).